A 221-amino-acid chain; its full sequence is Octanoyltransferase (221 aa).

One can recognise a BPL/LPL catalytic domain in the interval 31-213; that stretch reads DKSADEIWLV…HFVTILGYNK (183 aa). Substrate contacts are provided by residues 70-77, 142-144, and 155-157; these read RGGQITYH, SLG, and GLA. Cysteine 173 serves as the catalytic Acyl-thioester intermediate.

Belongs to the LipB family.

It localises to the cytoplasm. The enzyme catalyses octanoyl-[ACP] + L-lysyl-[protein] = N(6)-octanoyl-L-lysyl-[protein] + holo-[ACP] + H(+). Its pathway is protein modification; protein lipoylation via endogenous pathway; protein N(6)-(lipoyl)lysine from octanoyl-[acyl-carrier-protein]: step 1/2. In terms of biological role, catalyzes the transfer of endogenously produced octanoic acid from octanoyl-acyl-carrier-protein onto the lipoyl domains of lipoate-dependent enzymes. Lipoyl-ACP can also act as a substrate although octanoyl-ACP is likely to be the physiological substrate. This Mannheimia succiniciproducens (strain KCTC 0769BP / MBEL55E) protein is Octanoyltransferase.